The sequence spans 70 residues: MWFEILPGLSVMGVCLLIPGLATAYIHRFTNGGKEKRVAHFGYHWSLMERDRRISGVDRYYVSKGLENID.

Residues 1-21 (MWFEILPGLSVMGVCLLIPGL) form a helical membrane-spanning segment.

Belongs to the complex I NDUFA1 subunit family. In terms of assembly, complex I is composed of 45 different subunits. As to expression, primarily expressed in heart and skeletal muscle.

The protein localises to the mitochondrion inner membrane. In terms of biological role, accessory subunit of the mitochondrial membrane respiratory chain NADH dehydrogenase (Complex I), that is believed not to be involved in catalysis. Complex I functions in the transfer of electrons from NADH to the respiratory chain. The immediate electron acceptor for the enzyme is believed to be ubiquinone. In Homo sapiens (Human), this protein is NADH dehydrogenase [ubiquinone] 1 alpha subcomplex subunit 1 (NDUFA1).